Reading from the N-terminus, the 118-residue chain is Large ribosomal subunit protein uL18 (118 aa).

Belongs to the universal ribosomal protein uL18 family. In terms of assembly, part of the 50S ribosomal subunit; part of the 5S rRNA/L5/L18/L25 subcomplex. Contacts the 5S and 23S rRNAs.

Its function is as follows. This is one of the proteins that bind and probably mediate the attachment of the 5S RNA into the large ribosomal subunit, where it forms part of the central protuberance. This Campylobacter lari (strain RM2100 / D67 / ATCC BAA-1060) protein is Large ribosomal subunit protein uL18.